The chain runs to 362 residues: 3-dehydroquinate synthase (362 aa).

Residues 71–76 (DGEQYK), 105–109 (GVVGD), 129–130 (TT), K142, K151, and 169–172 (CLKT) each bind NAD(+). The Zn(2+) site is built by E184, H247, and H264.

This sequence belongs to the sugar phosphate cyclases superfamily. Dehydroquinate synthase family. Co(2+) is required as a cofactor. Requires Zn(2+) as cofactor. It depends on NAD(+) as a cofactor.

Its subcellular location is the cytoplasm. The catalysed reaction is 7-phospho-2-dehydro-3-deoxy-D-arabino-heptonate = 3-dehydroquinate + phosphate. The protein operates within metabolic intermediate biosynthesis; chorismate biosynthesis; chorismate from D-erythrose 4-phosphate and phosphoenolpyruvate: step 2/7. Its function is as follows. Catalyzes the conversion of 3-deoxy-D-arabino-heptulosonate 7-phosphate (DAHP) to dehydroquinate (DHQ). This is 3-dehydroquinate synthase from Escherichia coli (strain K12 / MC4100 / BW2952).